The following is a 261-amino-acid chain: Zinc finger protein 664 (261 aa).

C2H2-type zinc fingers lie at residues 3–25 (YKCP…QKIH), 31–53 (HKCD…WRDH), 59–81 (YKCD…KKIH), 87–109 (YKCY…MRVH), 115–137 (YVCS…QRVH), 143–165 (FKCE…QRVH), 171–193 (YKCY…QRVH), 199–221 (YRCC…QRVH), and 227–249 (FKCD…QRVH). Lysine 257 participates in a covalent cross-link: Glycyl lysine isopeptide (Lys-Gly) (interchain with G-Cter in SUMO2).

This sequence belongs to the krueppel C2H2-type zinc-finger protein family.

The protein localises to the nucleus. Its function is as follows. May be involved in transcriptional regulation. The polypeptide is Zinc finger protein 664 (Homo sapiens (Human)).